A 410-amino-acid chain; its full sequence is Probable 2,3-bisphosphoglycerate-independent phosphoglycerate mutase (410 aa).

This sequence belongs to the BPG-independent phosphoglycerate mutase family. A-PGAM subfamily.

The catalysed reaction is (2R)-2-phosphoglycerate = (2R)-3-phosphoglycerate. It functions in the pathway carbohydrate degradation; glycolysis; pyruvate from D-glyceraldehyde 3-phosphate: step 3/5. Functionally, catalyzes the interconversion of 2-phosphoglycerate and 3-phosphoglycerate. The protein is Probable 2,3-bisphosphoglycerate-independent phosphoglycerate mutase of Deinococcus radiodurans (strain ATCC 13939 / DSM 20539 / JCM 16871 / CCUG 27074 / LMG 4051 / NBRC 15346 / NCIMB 9279 / VKM B-1422 / R1).